A 406-amino-acid polypeptide reads, in one-letter code: Protein PHYTOCHROME KINASE SUBSTRATE 4 (406 aa).

Residues 106-119 are compositionally biased toward polar residues; the sequence is SWNSQTGLLSNKNR. Residues 106 to 133 are disordered; the sequence is SWNSQTGLLSNKNRQGSDRDGRRSSKKG.

Belongs to the PKS family. As to quaternary structure, interacts in vitro with PHYA and PHYB. Expressed in the hypocotyl elongation zone. Not found in the root elongation zone.

Modulates phytochrome-mediated control of hypocotyl growth orientation. Involved in PHYA and PHYB signaling. Acts as an inhibitor of asymmetric growth. Not involved in the control of leaf flattening. The chain is Protein PHYTOCHROME KINASE SUBSTRATE 4 (PKS4) from Arabidopsis thaliana (Mouse-ear cress).